Reading from the N-terminus, the 291-residue chain is Kynurenine formamidase (291 aa).

An HGGXW motif is present at residues 33–37 (HGGAW). Ser-107 functions as the Nucleophile in the catalytic mechanism. Active-site residues include Asp-242 and His-280.

Belongs to the kynurenine formamidase family. Homodimer.

It catalyses the reaction N-formyl-L-kynurenine + H2O = L-kynurenine + formate + H(+). It participates in amino-acid degradation; L-tryptophan degradation via kynurenine pathway; L-kynurenine from L-tryptophan: step 2/2. Functionally, catalyzes the hydrolysis of N-formyl-L-kynurenine to L-kynurenine, the second step in the kynurenine pathway of tryptophan degradation. Kynurenine may be further oxidized to nicotinic acid, NAD(H) and NADP(H). Required for elimination of toxic metabolites. The chain is Kynurenine formamidase from Debaryomyces hansenii (strain ATCC 36239 / CBS 767 / BCRC 21394 / JCM 1990 / NBRC 0083 / IGC 2968) (Yeast).